Consider the following 241-residue polypeptide: Ubiquinone biosynthesis O-methyltransferase (241 aa).

S-adenosyl-L-methionine-binding residues include Arg46, Gly66, Asp87, and Met131.

The protein belongs to the methyltransferase superfamily. UbiG/COQ3 family.

The enzyme catalyses a 3-demethylubiquinol + S-adenosyl-L-methionine = a ubiquinol + S-adenosyl-L-homocysteine + H(+). It catalyses the reaction a 3-(all-trans-polyprenyl)benzene-1,2-diol + S-adenosyl-L-methionine = a 2-methoxy-6-(all-trans-polyprenyl)phenol + S-adenosyl-L-homocysteine + H(+). It participates in cofactor biosynthesis; ubiquinone biosynthesis. O-methyltransferase that catalyzes the 2 O-methylation steps in the ubiquinone biosynthetic pathway. The protein is Ubiquinone biosynthesis O-methyltransferase of Bordetella bronchiseptica (strain ATCC BAA-588 / NCTC 13252 / RB50) (Alcaligenes bronchisepticus).